We begin with the raw amino-acid sequence, 306 residues long: MNSSPITQVSNPNDSLNHSSTNLIPSSHNSLNNYPQKSVKGNRKKKGSIINKLFCCFVPSNDQNNGNNINTDNGASNNDKLQQQKQYNQQQQQQYNQHQQQQQQQQQQQQYINKDSSQQNGEIPLMVPMIPRHVGLKTLVLDLDETLVHSSFKPVHNPDFIVPVEIEGTIHQVYVVKRPFVDDFLRAIAEKFEIVVFTASLAKYADPVLDFLDTGRVIHYRLFRESCHNHKGNYVKDLSRLGRDLKSTIIVDNSPSSYLFHPENAIPIDSWFDDKDDRELLDLLPLLDDLIKVEDVRLVLDESRNN.

Positions 1-36 (MNSSPITQVSNPNDSLNHSSTNLIPSSHNSLNNYPQ) are enriched in polar residues. 2 disordered regions span residues 1–45 (MNSS…NRKK) and 61–116 (NDQN…NKDS). The span at 61–111 (NDQNNGNNINTDNGASNNDKLQQQKQYNQQQQQQYNQHQQQQQQQQQQQQY) shows a compositional bias: low complexity. Residues 132–290 (RHVGLKTLVL…LDLLPLLDDL (159 aa)) form the FCP1 homology domain. Aspartate 142 serves as the catalytic 4-aspartylphosphate intermediate. Positions 142, 144, and 253 each coordinate Mg(2+). Aspartate 144 (proton donor) is an active-site residue.

In terms of assembly, monomer. Mg(2+) serves as cofactor.

The protein resides in the nucleus. The catalysed reaction is O-phospho-L-seryl-[protein] + H2O = L-seryl-[protein] + phosphate. It catalyses the reaction O-phospho-L-threonyl-[protein] + H2O = L-threonyl-[protein] + phosphate. Functionally, may function as a phosphatase involved in the regulation of cell growth and differentiation. The chain is Probable C-terminal domain small phosphatase (fcpA) from Dictyostelium discoideum (Social amoeba).